Here is a 795-residue protein sequence, read N- to C-terminus: Phenylalanine--tRNA ligase beta subunit (795 aa).

Residues 39–148 (AGSFHGVVVG…ADAPIGTDIR (110 aa)) enclose the tRNA-binding domain. A B5 domain is found at 401–476 (PKRATITLRR…RVYGYNNIPD (76 aa)). Positions 454, 460, 463, and 464 each coordinate Mg(2+). In terms of domain architecture, FDX-ACB spans 701–794 (SRFPANRRDI…LKERFQASLR (94 aa)).

Belongs to the phenylalanyl-tRNA synthetase beta subunit family. Type 1 subfamily. As to quaternary structure, tetramer of two alpha and two beta subunits. Mg(2+) is required as a cofactor.

The protein resides in the cytoplasm. It carries out the reaction tRNA(Phe) + L-phenylalanine + ATP = L-phenylalanyl-tRNA(Phe) + AMP + diphosphate + H(+). The sequence is that of Phenylalanine--tRNA ligase beta subunit from Escherichia coli O157:H7.